We begin with the raw amino-acid sequence, 256 residues long: Major prion protein 2 (256 aa).

The first 24 residues, 1-24 (MVKSHIGSWILVLFVAMWSDVALC), serve as a signal peptide directing secretion. Residues 25-233 (KKRPKPGGGW…ESEAYYQRGA (209 aa)) are interaction with GRB2, ERI3 and SYN1. The tract at residues 28 to 110 (PKPGGGWNTG…QWNKPSKPKT (83 aa)) is disordered. 5 tandem repeats follow at residues 54–62 (PQEGGDWGQ), 63–70 (PHGGGWGQ), 71–78 (PHVGGWGQ), 79–86 (PHGGGWGQ), and 87–95 (PHGGGGWGQ). Positions 54-95 (PQEGGDWGQPHGGGWGQPHVGGWGQPHGGGWGQPHGGGGWGQ) are 5 X 8 AA tandem repeats of P-H-G-G-G-W-G-Q. Positions 58-99 (GDWGQPHGGGWGQPHVGGWGQPHGGGWGQPHGGGGWGQGGTH) are enriched in gly residues. Cu(2+) contacts are provided by His64, Gly65, Gly66, His72, Gly74, His80, Gly81, Gly82, His88, Gly90, and Gly91. Residues Cys182 and Cys217 are joined by a disulfide bond. N-linked (GlcNAc...) asparagine glycans are attached at residues Asn184 and Asn200. Ala233 carries the GPI-anchor amidated alanine lipid modification. A propeptide spans 234-256 (SVILFSSPPVILLISFLIFLIVG) (removed in mature form).

Belongs to the prion family. Monomer and homodimer. Has a tendency to aggregate into amyloid fibrils containing a cross-beta spine, formed by a steric zipper of superposed beta-strands. Soluble oligomers may represent an intermediate stage on the path to fibril formation. Copper binding may promote oligomerization. Interacts with GRB2, APP, ERI3/PRNPIP and SYN1. Mislocalized cytosolically exposed PrP interacts with MGRN1; this interaction alters MGRN1 subcellular location and causes lysosomal enlargement. Interacts with KIAA1191.

The protein resides in the cell membrane. It localises to the golgi apparatus. Its function is as follows. Its primary physiological function is unclear. Has cytoprotective activity against internal or environmental stresses. May play a role in neuronal development and synaptic plasticity. May be required for neuronal myelin sheath maintenance. May play a role in iron uptake and iron homeostasis. Soluble oligomers are toxic to cultured neuroblastoma cells and induce apoptosis (in vitro). Association with GPC1 (via its heparan sulfate chains) targets PRNP to lipid rafts. Also provides Cu(2+) or Zn(2+) for the ascorbate-mediated GPC1 deaminase degradation of its heparan sulfate side chains. This chain is Major prion protein 2, found in Tragelaphus strepsiceros (Greater kudu).